Here is a 607-residue protein sequence, read N- to C-terminus: NAD-dependent malic enzyme 2, mitochondrial (607 aa).

A mitochondrion-targeting transit peptide spans 1-32 (MMWKNIAGLSKAAAAARTHGSRRCFSTAIPGP). Tyr136 (proton donor) is an active-site residue. Arg189 contacts NAD(+). The Proton acceptor role is filled by Lys207. A divalent metal cation is bound by residues Glu278, Asp279, and Asp302. Asp302 and Asn449 together coordinate NAD(+).

Belongs to the malic enzymes family. As to quaternary structure, homodimer. Heterodimer of two related subunits in NAD-MEH complex. Interacts with NAD-ME1. Mg(2+) is required as a cofactor. It depends on Mn(2+) as a cofactor. As to expression, expressed in leaves, stems, flowers, and roots (at protein level). Present in pollen.

The protein resides in the mitochondrion. The enzyme catalyses (S)-malate + NAD(+) = pyruvate + CO2 + NADH. Activated by 2-ketoglutarate, phosphoenolpyruvate (PEP), fructose 1,6-biphosphate (FBP) and coenzyme A (acetyl-CoA and CoA) as homodimer and by oxaloacetate (OAA), 2-ketoglutarate, succinate, fumarate and CoA as heterodimer NAD-MEH. Repressed by succinate and fumarate as homodimer, in the presence of NAD(+) and competitively toward the substrate L-malate. Functionally, involved in the regulation of sugars and amino acids metabolisms during the night period. This chain is NAD-dependent malic enzyme 2, mitochondrial (NAD-ME2), found in Arabidopsis thaliana (Mouse-ear cress).